The chain runs to 231 residues: MQQVPYGSVDRDKPLIRVPFTRLAVITVCLPLLGLVACIVLAMLYHYNDATYTHCQVPNYLPSISAAISLTPERYIWRFSIGLHSAPRFLVAAAYLSFYRGRFSRRLTEQLLSGFTFLLALSENVGLLLLTYVSSTETYSVHKSGFILFIGSSLFHMLCTCKLWSLIVKYSISSEEMMSYWFKLRLFLFNGGCCVLAVYFYRRHNTYCEEGITHASRCVSIWWCCPTWPST.

The Cytoplasmic portion of the chain corresponds to 1-22 (MQQVPYGSVDRDKPLIRVPFTR). Residues 23–43 (LAVITVCLPLLGLVACIVLAM) form a helical membrane-spanning segment. Over 44–78 (LYHYNDATYTHCQVPNYLPSISAAISLTPERYIWR) the chain is Lumenal. The helical transmembrane segment at 79-99 (FSIGLHSAPRFLVAAAYLSFY) threads the bilayer. Residues 100 to 110 (RGRFSRRLTEQ) lie on the Cytoplasmic side of the membrane. Residues 111–131 (LLSGFTFLLALSENVGLLLLT) form a helical membrane-spanning segment. Residues 132–146 (YVSSTETYSVHKSGF) lie on the Lumenal side of the membrane. The chain crosses the membrane as a helical span at residues 147 to 167 (ILFIGSSLFHMLCTCKLWSLI). The Cytoplasmic segment spans residues 168–179 (VKYSISSEEMMS). The chain crosses the membrane as a helical span at residues 180–200 (YWFKLRLFLFNGGCCVLAVYF). Topologically, residues 201 to 231 (YRRHNTYCEEGITHASRCVSIWWCCPTWPST) are lumenal.

It belongs to the PGAP2 family.

The protein localises to the golgi apparatus membrane. Functionally, involved in the fatty acid remodeling steps of GPI-anchor maturation where the unsaturated acyl chain at sn-2 of inositol phosphate is replaced by a saturated stearoyl chain. May catalyze the second step of the fatty acid remodeling, by reacylating a lyso-GPI intermediate at sn-2 of inositol phosphate by a saturated chain. The fatty acid remodeling steps is critical for the integration of GPI-APs into lipid rafts. This chain is Acyltransferase PGAP2, found in Danio rerio (Zebrafish).